The primary structure comprises 220 residues: Protein-L-isoaspartate O-methyltransferase (220 aa).

Ser70 is a catalytic residue.

It belongs to the methyltransferase superfamily. L-isoaspartyl/D-aspartyl protein methyltransferase family.

It is found in the cytoplasm. The catalysed reaction is [protein]-L-isoaspartate + S-adenosyl-L-methionine = [protein]-L-isoaspartate alpha-methyl ester + S-adenosyl-L-homocysteine. Functionally, catalyzes the methyl esterification of L-isoaspartyl residues in peptides and proteins that result from spontaneous decomposition of normal L-aspartyl and L-asparaginyl residues. It plays a role in the repair and/or degradation of damaged proteins. The protein is Protein-L-isoaspartate O-methyltransferase of Halorhodospira halophila (strain DSM 244 / SL1) (Ectothiorhodospira halophila (strain DSM 244 / SL1)).